The sequence spans 968 residues: RNA polymerase-associated protein RapA (968 aa).

The Helicase ATP-binding domain maps to 163–332 (EVGRRYAPRV…FARLRLLDPD (170 aa)). Residue 176 to 183 (DEVGLGKT) coordinates ATP. The DEAH box signature appears at 278 to 281 (DEAH). In terms of domain architecture, Helicase C-terminal spans 491–641 (RVDWLIEFLK…AFELTCPSGH (151 aa)).

This sequence belongs to the SNF2/RAD54 helicase family. RapA subfamily. Interacts with the RNAP. Has a higher affinity for the core RNAP than for the holoenzyme. Its ATPase activity is stimulated by binding to RNAP.

Its function is as follows. Transcription regulator that activates transcription by stimulating RNA polymerase (RNAP) recycling in case of stress conditions such as supercoiled DNA or high salt concentrations. Probably acts by releasing the RNAP, when it is trapped or immobilized on tightly supercoiled DNA. Does not activate transcription on linear DNA. Probably not involved in DNA repair. This chain is RNA polymerase-associated protein RapA, found in Shewanella baltica (strain OS185).